The following is a 122-amino-acid chain: Protein C10 (122 aa).

It belongs to the UPF0456 family.

It is found in the cytoplasm. The chain is Protein C10 from Danio rerio (Zebrafish).